The sequence spans 594 residues: Parathyroid hormone/parathyroid hormone-related peptide receptor (594 aa).

The first 28 residues, 1 to 28 (MGTARIAPGLALLLCCPVLSSAYALVDA), serve as a signal peptide directing secretion. Residues 29 to 188 (DDVMTKEEQI…TREREVFDRL (160 aa)) lie on the Extracellular side of the membrane. Disulfide bonds link Cys-48–Cys-117, Cys-108–Cys-149, and Cys-132–Cys-171. Positions 66 to 102 (DKGWTSASTSGKPRKDKASGKLYPESEEDKEAPTDSR) are disordered. 4 N-linked (GlcNAc...) asparagine glycosylation sites follow: Asn-152, Asn-162, Asn-167, and Asn-177. A helical transmembrane segment spans residues 189-209 (GMIYTVGYSMSLASLTVAVLI). Residues 210–223 (LAYFRRLHCTRNYI) lie on the Cytoplasmic side of the membrane. The helical transmembrane segment at 224–244 (HMHLFLSFMLRAVSIFVKDAV) threads the bilayer. Topologically, residues 245-295 (LYSGATLDEAERLTEEELRAIAQAPPPPATAAAGYAGCRVAVTFFLYFLAT) are extracellular. Residues 296–316 (NYYWILVEGLYLHSLIFMAFF) traverse the membrane as a helical segment. Residues 317 to 319 (SEK) lie on the Cytoplasmic side of the membrane. A helical membrane pass occupies residues 320-340 (KYLWGFTVFGWGLPAVFVAVW). Residues 341-361 (VSVRATLANTGCWDLSSGNKK) lie on the Extracellular side of the membrane. A helical transmembrane segment spans residues 362 to 382 (WIIQVPILASIVLHFILFINI). Topologically, residues 383-405 (VRVLATKLRETNAGRCDTRQQYR) are cytoplasmic. A helical transmembrane segment spans residues 406–426 (KLLKSTLVLMPLFGVHYIVFM). The Extracellular portion of the chain corresponds to 427–440 (ATPYTEVSGTLWQV). The helical transmembrane segment at 441–461 (QMHYEMLFNSFQGFFVAIIYC) threads the bilayer. Over 462–594 (FCNGEVQAEI…LLQEEWETVM (133 aa)) the chain is Cytoplasmic. Residues 475–478 (WSRW) carry the Important for interaction with G proteins motif. Positions 525 to 594 (PTATTNGHPQ…LLQEEWETVM (70 aa)) are disordered. Positions 543 to 558 (TPALETLETTPPATAA) are enriched in low complexity. A Phosphothreonine modification is found at Thr-552.

The protein belongs to the G-protein coupled receptor 2 family. In terms of assembly, homodimer in the absence of bound ligand. Peptide hormone binding leads to dissociation of the homodimer. N-glycosylated.

It localises to the cell membrane. G-protein-coupled receptor for parathyroid hormone (PTH) and for parathyroid hormone-related peptide (PTHLH). Ligand binding causes a conformation change that triggers signaling via guanine nucleotide-binding proteins (G proteins) and modulates the activity of downstream effectors, such as adenylate cyclase (cAMP). PTH1R is coupled to G(s) G alpha proteins and mediates activation of adenylate cyclase activity. PTHLH dissociates from PTH1R more rapidly than PTH; as consequence, the cAMP response induced by PTHLH decays faster than the response induced by PTH. The sequence is that of Parathyroid hormone/parathyroid hormone-related peptide receptor (PTH1R) from Pongo abelii (Sumatran orangutan).